Here is a 447-residue protein sequence, read N- to C-terminus: N-succinylarginine dihydrolase (447 aa).

Substrate contacts are provided by residues 19–28 (AGLSFGNEAS), asparagine 110, and 137–138 (HR). Glutamate 174 is a catalytic residue. Residue arginine 213 participates in substrate binding. Histidine 249 is a catalytic residue. Aspartate 251 and asparagine 364 together coordinate substrate. Cysteine 370 serves as the catalytic Nucleophile.

It belongs to the succinylarginine dihydrolase family. In terms of assembly, homodimer.

It carries out the reaction N(2)-succinyl-L-arginine + 2 H2O + 2 H(+) = N(2)-succinyl-L-ornithine + 2 NH4(+) + CO2. It functions in the pathway amino-acid degradation; L-arginine degradation via AST pathway; L-glutamate and succinate from L-arginine: step 2/5. Catalyzes the hydrolysis of N(2)-succinylarginine into N(2)-succinylornithine, ammonia and CO(2). This Yersinia pestis bv. Antiqua (strain Antiqua) protein is N-succinylarginine dihydrolase.